We begin with the raw amino-acid sequence, 446 residues long: Tubulin alpha chain-like 3 (446 aa).

Residues 1 to 4 carry the MREC motif motif; the sequence is MREC. 8 residues coordinate GTP: Gln-11, Glu-78, Ser-147, Gly-151, Thr-152, Thr-186, Asn-213, and Asn-235. Glu-78 lines the Mg(2+) pocket. Glu-261 is an active-site residue.

Belongs to the tubulin family. In terms of assembly, dimer of alpha and beta chains. A typical microtubule is a hollow water-filled tube with an outer diameter of 25 nm and an inner diameter of 15 nM. Alpha-beta heterodimers associate head-to-tail to form protofilaments running lengthwise along the microtubule wall with the beta-tubulin subunit facing the microtubule plus end conferring a structural polarity. Microtubules usually have 13 protofilaments but different protofilament numbers can be found in some organisms and specialized cells. Mg(2+) serves as cofactor. Some glutamate residues at the C-terminus are polyglutamylated, resulting in polyglutamate chains on the gamma-carboxyl group. Polyglutamylation plays a key role in microtubule severing by spastin (SPAST). SPAST preferentially recognizes and acts on microtubules decorated with short polyglutamate tails: severing activity by SPAST increases as the number of glutamates per tubulin rises from one to eight, but decreases beyond this glutamylation threshold. Glutamylation is also involved in cilia motility. Post-translationally, some glutamate residues at the C-terminus are monoglycylated but not polyglycylated due to the absence of functional TTLL10 in human. Monoglycylation is mainly limited to tubulin incorporated into cilia and flagella axonemes, which is required for their stability and maintenance. Flagella glycylation controls sperm motility. Both polyglutamylation and monoglycylation can coexist on the same protein on adjacent residues, and lowering glycylation levels increases polyglutamylation, and reciprocally.

It is found in the cytoplasm. The protein localises to the cytoskeleton. The enzyme catalyses GTP + H2O = GDP + phosphate + H(+). Tubulin is the major constituent of microtubules, a cylinder consisting of laterally associated linear protofilaments composed of alpha- and beta-tubulin heterodimers. Microtubules grow by the addition of GTP-tubulin dimers to the microtubule end, where a stabilizing cap forms. Below the cap, tubulin dimers are in GDP-bound state, owing to GTPase activity of alpha-tubulin. The protein is Tubulin alpha chain-like 3 (TUBAL3) of Homo sapiens (Human).